The chain runs to 278 residues: MSVPTVLQKILARKAEEVAERRARVNLAEVERLARSADAPRGFANALLERAKRKEPAVIAEIKKASPSKGVLREHFVPAEIARSYEAGGAACLSVLTDVDFFQGADAYLKEARAACALPVVRKDFMIDPYQIVEARAIGADCILLIVSALDDVLMAELAATAKSVGLDVLVEVHDGTELERALKTLDTPLVGINNRNLHTFEVSLETTLDLLPEIPRDRLVVTESGILNRADVELMEVSEVYAFLVGEAFMRADDPGLELKRLFFQERGGVVLGADPD.

This sequence belongs to the TrpC family.

It carries out the reaction 1-(2-carboxyphenylamino)-1-deoxy-D-ribulose 5-phosphate + H(+) = (1S,2R)-1-C-(indol-3-yl)glycerol 3-phosphate + CO2 + H2O. Its pathway is amino-acid biosynthesis; L-tryptophan biosynthesis; L-tryptophan from chorismate: step 4/5. The chain is Indole-3-glycerol phosphate synthase from Pseudomonas aeruginosa (strain UCBPP-PA14).